Consider the following 310-residue polypeptide: uncharacterized protein (310 aa).

A compositionally biased stretch (basic residues) spans 1–11 (MKVKSILKHSR). 2 disordered regions span residues 1 to 227 (MKVK…SDHA) and 242 to 310 (AMEE…NENE). The segment covering 12-50 (MSSPSLETDSMESGQQQNMVSSTPSIDMNESDCSGTGTP) has biased composition (polar residues). The span at 51-80 (SEERIRRLRWDEENLSKAEQQKSAKMKITE) shows a compositional bias: basic and acidic residues. Over residues 91-105 (PDDEVPEINLDETDS) the composition is skewed to acidic residues. A compositionally biased stretch (low complexity) spans 110-121 (TAGTLGDTLGTL). Basic and acidic residues-rich tracts occupy residues 126 to 150 (VSKD…KKEP) and 182 to 195 (LPSK…ETKP). Acidic residues predominate over residues 242–253 (AMEEEALSEAEE). Residues 254-265 (NIPKKKPDFNEL) are compositionally biased toward basic and acidic residues. Serine 285 is modified (phosphoserine). Residues 297 to 310 (DSGSASDVNMNENE) are compositionally biased toward polar residues.

This is an uncharacterized protein from Schizosaccharomyces pombe (strain 972 / ATCC 24843) (Fission yeast).